The following is a 277-amino-acid chain: Putative hydro-lyase BPP3031 (277 aa).

This sequence belongs to the D-glutamate cyclase family.

The protein is Putative hydro-lyase BPP3031 of Bordetella parapertussis (strain 12822 / ATCC BAA-587 / NCTC 13253).